Here is a 490-residue protein sequence, read N- to C-terminus: ATP synthase subunit alpha 1 (490 aa).

It belongs to the ATPase alpha/beta chains family. As to quaternary structure, F-type ATPases have 2 components, CF(1) - the catalytic core - and CF(0) - the membrane proton channel. CF(1) has five subunits: alpha(3), beta(3), gamma(1), delta(1), epsilon(1). CF(0) has three main subunits: a(1), b(2) and c(9-12). The alpha and beta chains form an alternating ring which encloses part of the gamma chain. CF(1) is attached to CF(0) by a central stalk formed by the gamma and epsilon chains, while a peripheral stalk is formed by the delta and b chains.

It is found in the cell inner membrane. The enzyme catalyses ATP + H2O + 4 H(+)(in) = ADP + phosphate + 5 H(+)(out). Produces ATP from ADP in the presence of a proton gradient across the membrane. The alpha chain is a regulatory subunit. The sequence is that of ATP synthase subunit alpha 1 from Legionella pneumophila (strain Paris).